The sequence spans 316 residues: MLEEAYLDLAKTVLTTGHEKTDRTGTGTISLFGYQMRFNLQEGFPLLTTKKVPFGLIKSELLWFLRGDTNIRFLLQHHNHIWDEWAFQRYVDSPEYHGPDMTDFGRRSLVDADFNQRYQAEKKAFCDRIVTDQAFGDHFGDLGLVYGSQWRAWQGHQGETIDQLANVIETLRTHPDSRRMIVSAWNPADVPSMALPPCHTLFQFYVNDGKLSCQLYQRSADIFLGVPFNIASYALLTSLIAKEVGLEVGDFVHTLGDAHIYSNHVEQIKTQLARTPHAAPQLWLNPDKSSIFDYEMSDIKVTGYDPEPAIKAPVAV.

Residues arginine 23 and 178-179 contribute to the dUMP site; that span reads RR. Residue cysteine 198 is the Nucleophile of the active site. DUMP is bound by residues 218–221, asparagine 229, and 259–261; these read RSAD and HIY. Residue aspartate 221 participates in (6R)-5,10-methylene-5,6,7,8-tetrahydrofolate binding. Position 315 (alanine 315) interacts with (6R)-5,10-methylene-5,6,7,8-tetrahydrofolate.

The protein belongs to the thymidylate synthase family. Bacterial-type ThyA subfamily. Homodimer.

Its subcellular location is the cytoplasm. The enzyme catalyses dUMP + (6R)-5,10-methylene-5,6,7,8-tetrahydrofolate = 7,8-dihydrofolate + dTMP. It participates in pyrimidine metabolism; dTTP biosynthesis. Its function is as follows. Catalyzes the reductive methylation of 2'-deoxyuridine-5'-monophosphate (dUMP) to 2'-deoxythymidine-5'-monophosphate (dTMP) while utilizing 5,10-methylenetetrahydrofolate (mTHF) as the methyl donor and reductant in the reaction, yielding dihydrofolate (DHF) as a by-product. This enzymatic reaction provides an intracellular de novo source of dTMP, an essential precursor for DNA biosynthesis. The sequence is that of Thymidylate synthase from Levilactobacillus brevis (strain ATCC 367 / BCRC 12310 / CIP 105137 / JCM 1170 / LMG 11437 / NCIMB 947 / NCTC 947) (Lactobacillus brevis).